The primary structure comprises 603 residues: UvrABC system protein C (603 aa).

Residues 14–92 (ELPGVYRMLD…IKSLAPRYNI (79 aa)) enclose the GIY-YIG domain. Residues 201–236 (QEVTRRLTKSMEEASAKLAFEQAAVFRDQIQSLHQV) form the UVR domain.

It belongs to the UvrC family. In terms of assembly, interacts with UvrB in an incision complex.

It localises to the cytoplasm. In terms of biological role, the UvrABC repair system catalyzes the recognition and processing of DNA lesions. UvrC both incises the 5' and 3' sides of the lesion. The N-terminal half is responsible for the 3' incision and the C-terminal half is responsible for the 5' incision. The protein is UvrABC system protein C of Dechloromonas aromatica (strain RCB).